A 457-amino-acid polypeptide reads, in one-letter code: Cytochrome b-c1 complex subunit 1, mitochondrial (457 aa).

The transit peptide at methionine 1–lysine 26 directs the protein to the mitochondrion.

The protein belongs to the peptidase M16 family. UQCRC1/QCR1 subfamily. In terms of assembly, component of the ubiquinol-cytochrome c oxidoreductase (cytochrome b-c1 complex, complex III, CIII), a multisubunit enzyme composed of 10 subunits. The complex is composed of 3 respiratory subunits cytochrome b (COB), cytochrome c1 (CYT1) and Rieske protein (RIP1), 2 core protein subunits COR1 and QCR2, and 5 low-molecular weight protein subunits QCR6, QCR7, QCR8, QCR9 and QCR10. The complex exists as an obligatory dimer and forms supercomplexes (SCs) in the inner mitochondrial membrane with a monomer or a dimer of cytochrome c oxidase (complex IV, CIV), resulting in 2 different assemblies (supercomplexes III(2)IV and III(2)IV(2)). COR1 interacts with COX5A at the CIII-CIV interface.

It localises to the mitochondrion inner membrane. Component of the ubiquinol-cytochrome c oxidoreductase, a multisubunit transmembrane complex that is part of the mitochondrial electron transport chain which drives oxidative phosphorylation. The respiratory chain contains 3 multisubunit complexes succinate dehydrogenase (complex II, CII), ubiquinol-cytochrome c oxidoreductase (cytochrome b-c1 complex, complex III, CIII) and cytochrome c oxidase (complex IV, CIV), that cooperate to transfer electrons derived from NADH and succinate to molecular oxygen, creating an electrochemical gradient over the inner membrane that drives transmembrane transport and the ATP synthase. The cytochrome b-c1 complex catalyzes electron transfer from ubiquinol to cytochrome c, linking this redox reaction to translocation of protons across the mitochondrial inner membrane, with protons being carried across the membrane as hydrogens on the quinol. In the process called Q cycle, 2 protons are consumed from the matrix, 4 protons are released into the intermembrane space and 2 electrons are passed to cytochrome c. The chain is Cytochrome b-c1 complex subunit 1, mitochondrial (COR1) from Saccharomyces cerevisiae (strain ATCC 204508 / S288c) (Baker's yeast).